We begin with the raw amino-acid sequence, 104 residues long: uncharacterized protein (104 aa).

Belongs to the BolA/IbaG family.

This is an uncharacterized protein from Buchnera aphidicola subsp. Acyrthosiphon pisum (strain APS) (Acyrthosiphon pisum symbiotic bacterium).